Reading from the N-terminus, the 551-residue chain is Glucans biosynthesis protein D (551 aa).

The tat-type signal signal peptide spans 1–32; the sequence is MNRRRFIKGSMAMAAVCGSSGIASLFSQAAFA.

This sequence belongs to the OpgD/OpgG family. Predicted to be exported by the Tat system. The position of the signal peptide cleavage has not been experimentally proven.

It is found in the periplasm. The protein operates within glycan metabolism; osmoregulated periplasmic glucan (OPG) biosynthesis. Probably involved in the control of the structural glucose backbone of osmoregulated periplasmic glucans (OPGs). This Salmonella paratyphi A (strain ATCC 9150 / SARB42) protein is Glucans biosynthesis protein D.